A 307-amino-acid chain; its full sequence is Vesicle-trafficking protein SEC22a (307 aa).

Serine 2 is subject to N-acetylserine. Residues 2–187 are Cytoplasmic-facing; the sequence is SMILSASVIR…ISSAHQRLEP (186 aa). Residues serine 6 and serine 8 each carry the phosphoserine modification. Positions 8–119 constitute a Longin domain; it reads SVIRVRDGLP…YCFIEFDNFI (112 aa). Residues 188–208 form a helical membrane-spanning segment; that stretch reads ATLSGIVGFILSLLCGALNLI. The Lumenal portion of the chain corresponds to 209 to 226; sequence RGFHAIESLLQSDGDDFN. Residues 227-247 traverse the membrane as a helical segment; the sequence is YIIAFFLGTAACLYQCYLLVY. Residues 248–253 are Cytoplasmic-facing; the sequence is YTGWRN. The chain crosses the membrane as a helical span at residues 254–271; it reads VKSFLTFGLICLCNMYLY. Topologically, residues 272–274 are lumenal; it reads ELR. Residues 275-295 traverse the membrane as a helical segment; sequence NLWQLFFHVTVGAFVTLQIWL. Residues 296 to 307 lie on the Cytoplasmic side of the membrane; it reads RQAQGKAPDYDV.

Belongs to the synaptobrevin family.

It is found in the endoplasmic reticulum membrane. Functionally, may be involved in vesicle transport between the ER and the Golgi complex. The chain is Vesicle-trafficking protein SEC22a (SEC22A) from Macaca fascicularis (Crab-eating macaque).